A 122-amino-acid polypeptide reads, in one-letter code: Protein translocase subunit SecE (122 aa).

3 consecutive transmembrane segments (helical) span residues 14–34 (LLKW…NQYF), 38–58 (PILY…FLAL), and 93–113 (LIVV…DSLL).

This sequence belongs to the SecE/SEC61-gamma family. Component of the Sec protein translocase complex. Heterotrimer consisting of SecY, SecE and SecG subunits. The heterotrimers can form oligomers, although 1 heterotrimer is thought to be able to translocate proteins. Interacts with the ribosome. Interacts with SecDF, and other proteins may be involved. Interacts with SecA.

The protein resides in the cell inner membrane. Its function is as follows. Essential subunit of the Sec protein translocation channel SecYEG. Clamps together the 2 halves of SecY. May contact the channel plug during translocation. The chain is Protein translocase subunit SecE from Pseudomonas aeruginosa (strain ATCC 15692 / DSM 22644 / CIP 104116 / JCM 14847 / LMG 12228 / 1C / PRS 101 / PAO1).